The chain runs to 320 residues: Ribonuclease Z (320 aa).

The Zn(2+) site is built by His63, His65, Asp67, His68, His141, Asp212, and His270. Asp67 functions as the Proton acceptor in the catalytic mechanism.

Belongs to the RNase Z family. Homodimer. The cofactor is Zn(2+).

It carries out the reaction Endonucleolytic cleavage of RNA, removing extra 3' nucleotides from tRNA precursor, generating 3' termini of tRNAs. A 3'-hydroxy group is left at the tRNA terminus and a 5'-phosphoryl group is left at the trailer molecule.. In terms of biological role, zinc phosphodiesterase, which displays some tRNA 3'-processing endonuclease activity. Probably involved in tRNA maturation, by removing a 3'-trailer from precursor tRNA. This is Ribonuclease Z from Lacticaseibacillus casei (strain BL23) (Lactobacillus casei).